The sequence spans 339 residues: uncharacterized protein (339 aa).

A Rhodanese domain is found at 17–111; sequence VRGEIKCLDV…WEDLSLPQNE (95 aa).

This is an uncharacterized protein from Schizosaccharomyces pombe (strain 972 / ATCC 24843) (Fission yeast).